We begin with the raw amino-acid sequence, 247 residues long: Carboxy-S-adenosyl-L-methionine synthase (247 aa).

S-adenosyl-L-methionine is bound by residues Tyr-39, 64-66, 89-90, 117-118, Asn-132, and Arg-199; these read GCS, DN, and DI.

This sequence belongs to the class I-like SAM-binding methyltransferase superfamily. Cx-SAM synthase family. Homodimer.

The catalysed reaction is prephenate + S-adenosyl-L-methionine = carboxy-S-adenosyl-L-methionine + 3-phenylpyruvate + H2O. In terms of biological role, catalyzes the conversion of S-adenosyl-L-methionine (SAM) to carboxy-S-adenosyl-L-methionine (Cx-SAM). In Salmonella arizonae (strain ATCC BAA-731 / CDC346-86 / RSK2980), this protein is Carboxy-S-adenosyl-L-methionine synthase.